Reading from the N-terminus, the 186-residue chain is Transposon Tn501 resolvase (186 aa).

The Resolvase/invertase-type recombinase catalytic domain maps to histidine 4–glycine 137. Serine 12 acts as the O-(5'-phospho-DNA)-serine intermediate in catalysis. A disordered region spans residues asparagine 17–lysine 38. Residues lysine 164–arginine 183 constitute a DNA-binding region (H-T-H motif).

The protein belongs to the site-specific recombinase resolvase family.

Functionally, resolvase catalyzes the resolution (a site-specific recombination) of the cointegrated replicon to yield the final transposition products. This Pseudomonas aeruginosa protein is Transposon Tn501 resolvase (tnpR).